The primary structure comprises 191 residues: MKKHLLASLLGASLLLPTAVNAADYVIDTKGAHASIQFSVSHLGYSFVVGRFNEFDGKFSFDAAKVSDGKVEVNINTNSVDSNHAERDKHLRSDDFLNTAKFPAAKFVSTSVADKGNGDLWITGDLSLNGVTKPVTIKAHTVGEGQDPWGGYRAGFVGSTEFTMKDFGIKMDLGPASANVKLDLVVEGIKQ.

A signal peptide spans 1–22; the sequence is MKKHLLASLLGASLLLPTAVNA.

The protein belongs to the UPF0312 family. Type 1 subfamily.

The protein resides in the periplasm. This is UPF0312 protein Sden_2128 from Shewanella denitrificans (strain OS217 / ATCC BAA-1090 / DSM 15013).